The following is a 352-amino-acid chain: Holliday junction branch migration complex subunit RuvB (352 aa).

The tract at residues 1–26 (MIETDKLRAAAPERLISPQPADRQED) is disordered. The interval 4-193 (TDKLRAAAPE…FGIVSRLEFY (190 aa)) is large ATPase domain (RuvB-L). Residues L32, R33, G74, K77, T78, T79, 140–142 (EDF), R183, Y193, and R230 each bind ATP. T78 contacts Mg(2+). The tract at residues 194-264 (TPDELGFIVS…VADAALRMLD (71 aa)) is small ATPAse domain (RuvB-S). Positions 267 to 352 (SLGLDLMDRK…RPGGTDLFGG (86 aa)) are head domain (RuvB-H). Positions 322 and 327 each coordinate DNA.

This sequence belongs to the RuvB family. Homohexamer. Forms an RuvA(8)-RuvB(12)-Holliday junction (HJ) complex. HJ DNA is sandwiched between 2 RuvA tetramers; dsDNA enters through RuvA and exits via RuvB. An RuvB hexamer assembles on each DNA strand where it exits the tetramer. Each RuvB hexamer is contacted by two RuvA subunits (via domain III) on 2 adjacent RuvB subunits; this complex drives branch migration. In the full resolvosome a probable DNA-RuvA(4)-RuvB(12)-RuvC(2) complex forms which resolves the HJ.

It localises to the cytoplasm. It carries out the reaction ATP + H2O = ADP + phosphate + H(+). Its function is as follows. The RuvA-RuvB-RuvC complex processes Holliday junction (HJ) DNA during genetic recombination and DNA repair, while the RuvA-RuvB complex plays an important role in the rescue of blocked DNA replication forks via replication fork reversal (RFR). RuvA specifically binds to HJ cruciform DNA, conferring on it an open structure. The RuvB hexamer acts as an ATP-dependent pump, pulling dsDNA into and through the RuvAB complex. RuvB forms 2 homohexamers on either side of HJ DNA bound by 1 or 2 RuvA tetramers; 4 subunits per hexamer contact DNA at a time. Coordinated motions by a converter formed by DNA-disengaged RuvB subunits stimulates ATP hydrolysis and nucleotide exchange. Immobilization of the converter enables RuvB to convert the ATP-contained energy into a lever motion, pulling 2 nucleotides of DNA out of the RuvA tetramer per ATP hydrolyzed, thus driving DNA branch migration. The RuvB motors rotate together with the DNA substrate, which together with the progressing nucleotide cycle form the mechanistic basis for DNA recombination by continuous HJ branch migration. Branch migration allows RuvC to scan DNA until it finds its consensus sequence, where it cleaves and resolves cruciform DNA. The protein is Holliday junction branch migration complex subunit RuvB of Azoarcus sp. (strain BH72).